The sequence spans 281 residues: UPF0750 membrane protein YvjA (281 aa).

The next 5 helical transmembrane spans lie at 14–34, 56–76, 77–97, 108–128, and 149–169; these read YVYI…FLLP, AAYV…ILLG, GKFG…VFLT, LLAA…VYLG, and SLGK…MIVF.

The protein belongs to the UPF0750 family.

The protein localises to the cell membrane. This Bacillus subtilis (strain 168) protein is UPF0750 membrane protein YvjA (yvjA).